A 372-amino-acid polypeptide reads, in one-letter code: 4-hydroxy-3-methylbut-2-en-1-yl diphosphate synthase (flavodoxin) (372 aa).

Cys270, Cys273, Cys305, and Glu312 together coordinate [4Fe-4S] cluster.

This sequence belongs to the IspG family. [4Fe-4S] cluster serves as cofactor.

The enzyme catalyses (2E)-4-hydroxy-3-methylbut-2-enyl diphosphate + oxidized [flavodoxin] + H2O + 2 H(+) = 2-C-methyl-D-erythritol 2,4-cyclic diphosphate + reduced [flavodoxin]. Its pathway is isoprenoid biosynthesis; isopentenyl diphosphate biosynthesis via DXP pathway; isopentenyl diphosphate from 1-deoxy-D-xylulose 5-phosphate: step 5/6. Its function is as follows. Converts 2C-methyl-D-erythritol 2,4-cyclodiphosphate (ME-2,4cPP) into 1-hydroxy-2-methyl-2-(E)-butenyl 4-diphosphate. This is 4-hydroxy-3-methylbut-2-en-1-yl diphosphate synthase (flavodoxin) from Escherichia coli O139:H28 (strain E24377A / ETEC).